The sequence spans 559 residues: Branched-chain-amino-acid aminotransferase-like protein 2 (559 aa).

This sequence belongs to the class-IV pyridoxal-phosphate-dependent aminotransferase family.

The chain is Branched-chain-amino-acid aminotransferase-like protein 2 from Arabidopsis thaliana (Mouse-ear cress).